The chain runs to 483 residues: Glutamyl-tRNA(Gln) amidotransferase subunit A (483 aa).

Catalysis depends on charge relay system residues Lys75 and Ser150. Ser174 functions as the Acyl-ester intermediate in the catalytic mechanism.

It belongs to the amidase family. GatA subfamily. In terms of assembly, heterotrimer of A, B and C subunits.

The catalysed reaction is L-glutamyl-tRNA(Gln) + L-glutamine + ATP + H2O = L-glutaminyl-tRNA(Gln) + L-glutamate + ADP + phosphate + H(+). Functionally, allows the formation of correctly charged Gln-tRNA(Gln) through the transamidation of misacylated Glu-tRNA(Gln) in organisms which lack glutaminyl-tRNA synthetase. The reaction takes place in the presence of glutamine and ATP through an activated gamma-phospho-Glu-tRNA(Gln). This chain is Glutamyl-tRNA(Gln) amidotransferase subunit A, found in Legionella pneumophila (strain Corby).